The sequence spans 314 residues: 2,3-dihydroxyphenylpropionate/2,3-dihydroxicinnamic acid 1,2-dioxygenase (314 aa).

Residue His115 is the Proton donor of the active site. His179 functions as the Proton acceptor in the catalytic mechanism.

The protein belongs to the LigB/MhpB extradiol dioxygenase family. As to quaternary structure, homotetramer. Fe(2+) serves as cofactor.

It catalyses the reaction 3-(2,3-dihydroxyphenyl)propanoate + O2 = (2Z,4E)-2-hydroxy-6-oxonona-2,4-dienedioate + H(+). The catalysed reaction is (2E)-3-(2,3-dihydroxyphenyl)prop-2-enoate + O2 = (2Z,4E,7E)-2-hydroxy-6-oxonona-2,4,7-trienedioate + H(+). Its pathway is aromatic compound metabolism; 3-phenylpropanoate degradation. Catalyzes the non-heme iron(II)-dependent oxidative cleavage of 2,3-dihydroxyphenylpropionic acid and 2,3-dihydroxicinnamic acid into 2-hydroxy-6-ketononadienedioate and 2-hydroxy-6-ketononatrienedioate, respectively. This Klebsiella pneumoniae (strain 342) protein is 2,3-dihydroxyphenylpropionate/2,3-dihydroxicinnamic acid 1,2-dioxygenase.